The chain runs to 261 residues: MASKANMVRQRFSRLSQRMSAFQINLNPLKEPLGFIKILEWFASIFAFATCGGFKGKTEIQVNCPKVGVNKNQTVTATFGYPFRLNQASFHTPPNVSVCDVNWEKHVLIGDYSSSAQFYVTFAVFVFLYCIAALLLYVGYTNLYRDSRKLPMIDFIVTLVATFLWLVSSSAWAKALTDIKVATGHRIVEELEICNPESGVSCYFVSVTSMGSLNVSVIFGFLNMILWGGNAWFVYKETSLHSPSNTSASHSQGGGPPTSGM.

The Cytoplasmic portion of the chain corresponds to 1-33; sequence MASKANMVRQRFSRLSQRMSAFQINLNPLKEPL. Positions 28-239 constitute an MARVEL domain; it reads PLKEPLGFIK…NAWFVYKETS (212 aa). Residues 34 to 54 traverse the membrane as a helical segment; it reads GFIKILEWFASIFAFATCGGF. The Vesicular portion of the chain corresponds to 55–117; the sequence is KGKTEIQVNC…LIGDYSSSAQ (63 aa). N-linked (GlcNAc...) asparagine glycosylation is found at Asn72 and Asn95. A helical membrane pass occupies residues 118-138; the sequence is FYVTFAVFVFLYCIAALLLYV. Over 139-151 the chain is Cytoplasmic; it reads GYTNLYRDSRKLP. A helical transmembrane segment spans residues 152–172; the sequence is MIDFIVTLVATFLWLVSSSAW. Topologically, residues 173-214 are vesicular; that stretch reads AKALTDIKVATGHRIVEELEICNPESGVSCYFVSVTSMGSLN. Residue Asn214 is glycosylated (N-linked (GlcNAc...) asparagine). A helical membrane pass occupies residues 215–235; the sequence is VSVIFGFLNMILWGGNAWFVY. The Cytoplasmic segment spans residues 236 to 261; sequence KETSLHSPSNTSASHSQGGGPPTSGM. Polar residues predominate over residues 241–251; sequence HSPSNTSASHS. The disordered stretch occupies residues 241–261; sequence HSPSNTSASHSQGGGPPTSGM. Positions 252–261 are enriched in gly residues; that stretch reads QGGGPPTSGM.

This sequence belongs to the synaptophysin/synaptobrevin family. Ubiquitously expressed.

Its subcellular location is the cytoplasmic vesicle membrane. The protein localises to the melanosome. This chain is Synaptophysin-like protein 1 (Sypl1), found in Mus musculus (Mouse).